The following is a 436-amino-acid chain: 3-ketoacyl-CoA thiolase (436 aa).

C99 (acyl-thioester intermediate) is an active-site residue. Residues H392 and C422 each act as proton acceptor in the active site.

This sequence belongs to the thiolase-like superfamily. Thiolase family. Heterotetramer of two alpha chains (FadJ) and two beta chains (FadI).

Its subcellular location is the cytoplasm. It catalyses the reaction an acyl-CoA + acetyl-CoA = a 3-oxoacyl-CoA + CoA. The protein operates within lipid metabolism; fatty acid beta-oxidation. Its function is as follows. Catalyzes the final step of fatty acid oxidation in which acetyl-CoA is released and the CoA ester of a fatty acid two carbons shorter is formed. This chain is 3-ketoacyl-CoA thiolase, found in Salmonella newport (strain SL254).